We begin with the raw amino-acid sequence, 588 residues long: MTYQAPVRDIMFAIEHLSQWPQVEALQTYSEIELDDARAALEEFGRFCGEMIAPLSTIGDTEGARLENGRVVLPEGYKTAYDQFVDMGWQSLSHPAEHGGMGLPKVVGAAATEIVNSADMSFGLCPLLTNGAIDALSITGSDAQKAFYLDKLITGRWSGTMNLTEPQAGSDLSRVRCTAVPQDDGTYAISGTKIFITFGEHDLSENIVHLVLARTPDAPEGVRGLSLFVVPKLLAGEGGETSQRNTLGCVSLEHKLGVRASPTAVMEYDNATGYLVGEENSGLRYMFIMMTSARYAVGVQGVAIAERAYQHALSYARDRIQSRPVDGSAQDAVPIIQHPDVRRMLLRMRALTEGGRALAIATGGWLDLAEHGPEEARAEAQSMAEFLVPLVKGFCTERAVEVASLGVQIHGGMGFIEETGVAQFYRDARILPIYEGTTAIQANDLLGRKVLRDGGRTARRFAEMIAATEGELSKGGAAAQRIAQRLAEARAAFAAGLDHLLATAGQDPNRAYAGSVPFLMLTGNLATGWQLGLSALAAEAELAKGGDAEFLQAKIATADIFAQQVLVECSAEHSRITDTGDSLLTASL.

Catalysis depends on Glu-435, which acts as the Proton acceptor.

Belongs to the acyl-CoA dehydrogenase family. FAD is required as a cofactor.

The enzyme catalyses 3-(methylsulfanyl)propanoyl-CoA + oxidized [electron-transfer flavoprotein] + H(+) = 3-(methylsulfanyl)acryloyl-CoA + reduced [electron-transfer flavoprotein]. Functionally, involved in the assimilation of dimethylsulphoniopropionate (DMSP), an important compound in the fixation of carbon in marine phytoplankton, by mediating the conversion of 3-(methylthio)propanoyl-CoA (MMPA-CoA) to 3-(methylthio)acryloyl-CoA (MTA-CoA). This chain is 3-methylmercaptopropionyl-CoA dehydrogenase, found in Ruegeria pomeroyi (strain ATCC 700808 / DSM 15171 / DSS-3) (Silicibacter pomeroyi).